The chain runs to 1627 residues: Type III effector DspE (1627 aa).

Composition is skewed to polar residues over residues 22–44 (AKTSLSQGNSTSASQKGAQSLIQ) and 59–74 (GNGSSVRSQDSRSTTL). Disordered regions lie at residues 22–102 (AKTS…GPIQ) and 436–464 (QTQALATDRQGQKHVAPLGQNGLSPTPGW). 3 consecutive short sequence motifs (wxxxE) follow at residues 464–468 (WNLSD), 514–520 (WEASSVE), and 660–667 (WQNAANHD).

This sequence belongs to the AvrE family.

The protein localises to the secreted. Its subcellular location is the host cell. Functionally, major virulence factor that may function as a water- and solute-permeable channel dedicated to creating osmotic/water potential perturbation and a water- and nutrient-rich apoplast in which bacteria multiply within the infected plant tissues. Its function is as follows. Required for plant cell death in N.benthamiana leaves and leaf cell death in S.tuberosum. Essential for pathogenicity. Does not suppress callose formation. This Pectobacterium carotovorum (Erwinia carotovora) protein is Type III effector DspE.